Consider the following 258-residue polypeptide: Snake venom serine protease KN12 (258 aa).

A signal peptide spans 1-18 (MVLIRVLANLLILQLSYA). Residues 19 to 24 (QRSSEL) constitute a propeptide that is removed on maturation. One can recognise a Peptidase S1 domain in the interval 25–249 (VIGGDECNIN…HLDWIQNIIA (225 aa)). 6 cysteine pairs are disulfide-bonded: C31/C163, C50/C66, C98/C256, C142/C210, C174/C189, and C200/C225. The active-site Charge relay system is the H65. N103 carries N-linked (GlcNAc...) asparagine glycosylation. Residue D110 is the Charge relay system of the active site. N-linked (GlcNAc...) asparagine glycans are attached at residues N121, N122, N154, and N170. S204 acts as the Charge relay system in catalysis. N251 carries N-linked (GlcNAc...) asparagine glycosylation.

The protein belongs to the peptidase S1 family. Snake venom subfamily. In terms of assembly, monomer. In terms of tissue distribution, expressed by the venom gland.

The protein localises to the secreted. Snake venom serine protease that may act in the hemostasis system of the prey. In Trimeresurus stejnegeri (Chinese green tree viper), this protein is Snake venom serine protease KN12.